The following is a 399-amino-acid chain: 1-deoxy-D-xylulose 5-phosphate reductoisomerase (399 aa).

NADPH is bound by residues Thr16, Gly17, Ser18, Ile19, Gly42, Arg43, Asn44, and Asn127. Lys128 contributes to the 1-deoxy-D-xylulose 5-phosphate binding site. Glu129 contributes to the NADPH binding site. Asp153 contacts Mn(2+). Positions 154, 155, 179, and 202 each coordinate 1-deoxy-D-xylulose 5-phosphate. Glu155 is a Mn(2+) binding site. Gly208 lines the NADPH pocket. Positions 215, 220, 221, and 224 each coordinate 1-deoxy-D-xylulose 5-phosphate. Glu224 contacts Mn(2+).

It belongs to the DXR family. The cofactor is Mg(2+). It depends on Mn(2+) as a cofactor.

The enzyme catalyses 2-C-methyl-D-erythritol 4-phosphate + NADP(+) = 1-deoxy-D-xylulose 5-phosphate + NADPH + H(+). Its pathway is isoprenoid biosynthesis; isopentenyl diphosphate biosynthesis via DXP pathway; isopentenyl diphosphate from 1-deoxy-D-xylulose 5-phosphate: step 1/6. Catalyzes the NADPH-dependent rearrangement and reduction of 1-deoxy-D-xylulose-5-phosphate (DXP) to 2-C-methyl-D-erythritol 4-phosphate (MEP). The polypeptide is 1-deoxy-D-xylulose 5-phosphate reductoisomerase (Caulobacter vibrioides (strain NA1000 / CB15N) (Caulobacter crescentus)).